A 24-amino-acid polypeptide reads, in one-letter code: Brevinin-1PTb (24 aa).

A disulfide bridge connects residues Cys18 and Cys24.

As to expression, expressed by the skin glands.

It is found in the secreted. Has antibacterial activity against the Gram-positive bacterium S.aureus ATCC 25923 and the Gram-negative bacterium E.coli ATCC 25726. The polypeptide is Brevinin-1PTb (Pulchrana picturata (Malaysian fire frog)).